The chain runs to 166 residues: Small ribosomal subunit protein uS5 (166 aa).

Residues 11-74 form the S5 DRBM domain; it reads LQEKLIAVNR…EKARRNMITV (64 aa).

It belongs to the universal ribosomal protein uS5 family. Part of the 30S ribosomal subunit. Contacts proteins S4 and S8.

Its function is as follows. With S4 and S12 plays an important role in translational accuracy. Functionally, located at the back of the 30S subunit body where it stabilizes the conformation of the head with respect to the body. The sequence is that of Small ribosomal subunit protein uS5 from Histophilus somni (strain 2336) (Haemophilus somnus).